The chain runs to 442 residues: Radical S-adenosyl methionine domain-containing protein 1, mitochondrial (442 aa).

The N-terminal 17 residues, 1 to 17, are a transit peptide targeting the mitochondrion; it reads MVPSGVRTGRWVAAARA. In terms of domain architecture, Radical SAM core spans 34 to 270; sequence ESASTRAALY…RTVLRDAGFR (237 aa). Tyr43 is a binding site for S-adenosyl-L-methionine. [4Fe-4S] cluster-binding residues include Cys49, Cys53, and Cys56. Residues Gly98, 99 to 100, Glu131, Gln158, Arg170, and Asp195 each bind S-adenosyl-L-methionine; that span reads GT.

The protein belongs to the anaerobic coproporphyrinogen-III oxidase family. HemW subfamily. The cofactor is [4Fe-4S] cluster.

It is found in the mitochondrion. Its function is as follows. May be a heme chaperone, appears to bind heme. Homologous bacterial proteins do not have oxygen-independent coproporphyrinogen-III oxidase activity. Binds 1 [4Fe-4S] cluster. The cluster is coordinated with 3 cysteines and an exchangeable S-adenosyl-L-methionine. In Mus musculus (Mouse), this protein is Radical S-adenosyl methionine domain-containing protein 1, mitochondrial (Rsad1).